Here is a 186-residue protein sequence, read N- to C-terminus: UPF0301 protein Sfri_2850 (186 aa).

This sequence belongs to the UPF0301 (AlgH) family.

The protein is UPF0301 protein Sfri_2850 of Shewanella frigidimarina (strain NCIMB 400).